The sequence spans 523 residues: MAVGRKSLILSLLIQHFVLLHGAKILTVCFLGGSHYLWMDEISRILHNNGQEVTMFLQIADGLLPDYQMQESPYRLITWSLDKNYLKEFSEFFRDSKYNFKDCDELSSYLGLMTHFSRQCKMIFNQTSIMNLLKEEKYDLAVIDSFNPCTFLVSEKLGIPFIATHPFPVKSPWHSGIPNQLSYMPVYQSQLTDHMDFFERVKNVFMYIASAVLERKIYSLFDDVIEEHFPACSRPSFEELYKKTALWMYLTDFTIEFPHPFFPNVLYIGGVLAKPAKPVSEELEDFIAQSGEHGFIIVTFGSMVPSNPLTEFVKEMNDGFSKIPQKVIWRYRISEWPKVLQLAPNVKIMNWISQNDLLGHPKARLLVTHGGVNSIQEAIYHGVPMVAIPLFFDQFDNAVRIKAKHLGTFIPKDQLKAEKLANAIRDVIGGESYKNSAMHLSLIQRSQPFPKDQQIVRWVEHIVKVGGTDHLIPYSYQQPLYQQYLLDVFLFVCVCVIGACYLTVKLLKMFIQKLCSFRKLKQN.

The N-terminal stretch at 1-23 (MAVGRKSLILSLLIQHFVLLHGA) is a signal peptide. Residues 24–483 (KILTVCFLGG…YSYQQPLYQQ (460 aa)) are Extracellular-facing. Residue N125 is glycosylated (N-linked (GlcNAc...) asparagine). A helical membrane pass occupies residues 484-504 (YLLDVFLFVCVCVIGACYLTV). Over 505–523 (KLLKMFIQKLCSFRKLKQN) the chain is Cytoplasmic.

It belongs to the UDP-glycosyltransferase family.

It is found in the membrane. The enzyme catalyses glucuronate acceptor + UDP-alpha-D-glucuronate = acceptor beta-D-glucuronoside + UDP + H(+). Functionally, UDP-glucuronosyltransferases catalyze phase II biotransformation reactions in which lipophilic substrates are conjugated with glucuronic acid to increase water solubility and enhance excretion. They are of major importance in the conjugation and subsequent elimination of potentially toxic xenobiotics and endogenous compounds. The sequence is that of UDP-glucuronosyltransferase 3A1 (ugt3a1) from Xenopus laevis (African clawed frog).